Here is a 3284-residue protein sequence, read N- to C-terminus: Location of vulva defective 1 (3284 aa).

Positions 1–21 are cleaved as a signal peptide; sequence MKKSNFFVLLLLAISAIQIDG. Disordered regions lie at residues 226 to 326, 350 to 505, 623 to 702, 827 to 926, and 1043 to 1216; these read ESTS…ITST, TTML…GTNP, VASS…ADST, STSE…ASTE, and TTTE…SLAT. 2 stretches are compositionally biased toward low complexity: residues 227–326 and 350–500; these read STST…ITST and TTML…TTSS. A compositionally biased stretch (low complexity) spans 827–913; the sequence is STSEVTSTTS…PSDSSSASDS (87 aa). The segment covering 914-926 has biased composition (polar residues); that stretch reads MRTTTVDPDASTE. Residues 1043–1057 show a composition bias toward low complexity; that stretch reads TTTETPPTTVSSSDD. The segment covering 1060-1078 has biased composition (gly residues); sequence GKTGGTGATGGTGGTGSGG. Positions 1079 to 1104 are enriched in low complexity; that stretch reads SATTLSTGDAVRSTTSGSGSGQSSTG. Gly residues predominate over residues 1105-1127; that stretch reads SGAGGSGTTASGSGSGGSSGTGS. Residues 1128–1138 show a composition bias toward polar residues; that stretch reads DGVNSGKTTAL. Low complexity predominate over residues 1163-1192; it reads GSGSDSNGSSGVSTKSSSGSDTSGSSDSSG. The segment covering 1197–1216 has biased composition (polar residues); that stretch reads FSATAQPSTRTTKTRSSLAT. Positions 2064–2227 constitute a GAIN-B domain; that stretch reads WNNSLQVEII…SVGAFNPTID (164 aa). Cys-2181 and Cys-2209 form a disulfide bridge. The interval 2181–2227 is GPS; that stretch reads CYFYQKTSDVFNSEGMYPSDGQGMQFVNCSTDHLTMFSVGAFNPTID. A helical membrane pass occupies residues 2245 to 2265; sequence VMIAAVFMLVVYGCLTINAII. Residues 2288-2411 enclose the PLAT domain; the sequence is YMYVIAVETG…GDGETERLAR (124 aa). The next 10 membrane-spanning stretches (helical) occupy residues 2453 to 2473, 2496 to 2516, 2557 to 2577, 2592 to 2612, 2672 to 2692, 2945 to 2965, 2994 to 3014, 3043 to 3063, 3089 to 3109, and 3144 to 3164; these read DYSVSIIFSLVVVSMISITIL, IAFGVGFGVLITFLNSLHILL, IIVFPVLMGLIYISGAGMSLM, LILWAVVFEPIKGLIWAFLIL, LFITIRDMLCFFASLYIMVML, MLYIFFSVLIFVKEIVFYLYG, WNFMDLIVGALAVASVLAYTI, WEIVFSYCLAGAVFFTSCKMI, FGIAFLFFSMTFNSVLYAVLG, and FAFVVIMLYMIAGSKLVLQLY.

Belongs to the polycystin family. In terms of assembly, interacts (via PLAT domain) with atp-2 (via N-terminus) and with kin-10 (via C-terminus). Interacts (via C-terminus) with isoform a of stam-1/pqn-19 (via C-terminus). Autoproteolytically processed at the GPS region of the GAIN-B domain; this cleavage modulates receptor activity. As to expression, exclusively expressed in a subset of three categories of adult male sensory neurons: ray neurons, hook neurons and head cephalic (CEM) neurons.

The protein localises to the membrane. It localises to the cell projection. The protein resides in the cilium. In terms of biological role, required for two aspects of male mating behavior: response to hermaphrodite contact and vulva location. Acts in the same pathway as pkd-2 and atp-2 in response behavior. May be required for ciliary targeting of pkd-2. The sequence is that of Location of vulva defective 1 (lov-1) from Caenorhabditis elegans.